The sequence spans 216 residues: uncharacterized protein (216 aa).

A 4Fe-4S ferredoxin-type domain is found at 18 to 47 (PPDSPIEDRCGSCNICVDSCPTGALVQGGQ). Residues Cys-27, Cys-30, Cys-33, Cys-37, Cys-79, Cys-82, and Cys-86 each coordinate [4Fe-4S] cluster.

This is an uncharacterized protein from Geobacillus stearothermophilus (Bacillus stearothermophilus).